The primary structure comprises 82 residues: U1-plectoxin-Pt1a (82 aa).

Residues M1 to A20 form the signal peptide. Positions E21 to R33 are excised as a propeptide. Disulfide bonds link C37–C51, C44–C57, C50–C68, C54–C77, and C59–C66. A lipid anchor (O-palmitoyl serine) is attached at S79. The propeptide occupies R80–R82.

This sequence belongs to the neurotoxin 02 (plectoxin) family. 02 (plectoxin) subfamily. Post-translationally, plectoxin-5 presumably undergoes post-translational modification to give rise to plectoxin-6. Expressed by the venom gland.

Its subcellular location is the secreted. In terms of biological role, potent toxin that may paralyze and/or kill insect pests such as H.virescens (lepidoptera), S.exigua (beet armyworm) and M.sexta (tobacco hornworm). In Plectreurys tristis (Spider), this protein is U1-plectoxin-Pt1a.